Here is a 465-residue protein sequence, read N- to C-terminus: A-type ATP synthase subunit B (465 aa).

The protein belongs to the ATPase alpha/beta chains family. As to quaternary structure, has multiple subunits with at least A(3), B(3), C, D, E, F, H, I and proteolipid K(x).

Its subcellular location is the cell membrane. In terms of biological role, component of the A-type ATP synthase that produces ATP from ADP in the presence of a proton gradient across the membrane. The B chain is a regulatory subunit. This Pyrococcus horikoshii (strain ATCC 700860 / DSM 12428 / JCM 9974 / NBRC 100139 / OT-3) protein is A-type ATP synthase subunit B.